A 292-amino-acid chain; its full sequence is UPF0725 protein At4g28920 (292 aa).

The span at 1–17 (MSENDSSESDIEMDPEE) shows a compositional bias: acidic residues. A disordered region spans residues 1-24 (MSENDSSESDIEMDPEEEKVYRRQ).

The protein belongs to the UPF0725 (EMB2204) family.

The sequence is that of UPF0725 protein At4g28920 from Arabidopsis thaliana (Mouse-ear cress).